Consider the following 75-residue polypeptide: Small ribosomal subunit protein bS18 (75 aa).

This sequence belongs to the bacterial ribosomal protein bS18 family. As to quaternary structure, part of the 30S ribosomal subunit. Forms a tight heterodimer with protein bS6.

Binds as a heterodimer with protein bS6 to the central domain of the 16S rRNA, where it helps stabilize the platform of the 30S subunit. The chain is Small ribosomal subunit protein bS18 from Desulforudis audaxviator (strain MP104C).